Here is a 52-residue protein sequence, read N- to C-terminus: Large ribosomal subunit protein bL32c (52 aa).

The protein belongs to the bacterial ribosomal protein bL32 family.

The protein resides in the plastid. Its subcellular location is the chloroplast. This is Large ribosomal subunit protein bL32c from Nymphaea alba (White water-lily).